The chain runs to 736 residues: Ethylene receptor 2 (736 aa).

The next 3 membrane-spanning stretches (helical) occupy residues 22-42, 53-73, and 94-114; these read ISDF…VYFV, VLVQ…INLW, and AAVS…LLSV. 2 residues coordinate Cu cation: Cys64 and His68. The 149-residue stretch at 157–305 folds into the GAF domain; it reads DRHTILKTTL…VVADQVAVAL (149 aa). The Histidine kinase domain occupies 348–585; it reads VMNHEMRTPM…TAIFIVKLGI (238 aa). His351 is modified (phosphohistidine; by autocatalysis). In terms of domain architecture, Response regulatory spans 613 to 730; that stretch reads KVLVMDDNGF…KMRSVLSGLL (118 aa). Residue Asp661 is modified to 4-aspartylphosphate.

It belongs to the ethylene receptor family. As to quaternary structure, homodimer; disulfide-linked. It depends on Cu cation as a cofactor. Post-translationally, activation probably requires a transfer of a phosphate group between a His in the transmitter domain and an Asp of the receiver domain. As to expression, leaves, flowers and fruits.

It localises to the endoplasmic reticulum membrane. The catalysed reaction is ATP + protein L-histidine = ADP + protein N-phospho-L-histidine.. Its function is as follows. May act early in the ethylene signal transduction pathway, possibly as an ethylene receptor, or as a regulator of the pathway. This Solanum lycopersicum (Tomato) protein is Ethylene receptor 2 (ETR2).